The following is a 632-amino-acid chain: MTHEFTENYDVIVIGAGHAGVEASLATSRMGCKTLLATINLDMLAFMPCNPSIGGSAKGIVVREIDALGGEMGKNIDKTYIQMKMLNTGKGPAVRALRAQADKSLYAREMKHTVEKQANLTLRQTMIDDILVEDGRVVGVLTATGQKFAAKAVVVTTGTALRGEIILGELKYSSGPNNSLASVTLADNLKKLGLEIGRFKTGTPPRVKASSINYDQTEIQPGDDKPNHFSFMSKDADYLKDQIPCWLTYTNQTSHDIINQNLYRAPMFSGIVKGVGPRYCPSIEDKIVRFADKERHQLFLEPEGRDTEEVYVQGLSTSLPEDVQKDLIHSIKGLEKAEMMRTGYAIEYDIVLPHQLRATLETKLISGLFTAGQTNGTSGYEEAAGQGLIAGINAALKVQGKPELILKRSDAYIGVMIDDLVTKGTLEPYRLLTSRAEYRLILRHDNADMRLTEIGRDIGLVDDERWKAFEIKKNQFDNELKRLNSIKLKPVKATNDRVQELGFKPLTDAMTAKEFMRRPEIDYATAVSFVGPAAEDLDAKIIELLETEIKYEGYIRKALDQVAKMKRMEEKRIPANIDWDAIDSIATEARQKFKKINPETIGQASRISGVNPADISILMIYLEGNGKAHRKY.

Residues 15 to 20 (GAGHAG), Ile-127, and Ser-182 each bind FAD. NAD(+) is bound at residue 276–290 (GPRYCPSIEDKIVRF). Gln-373 contacts FAD.

It belongs to the MnmG family. In terms of assembly, homodimer. Heterotetramer of two MnmE and two MnmG subunits. FAD serves as cofactor.

Its subcellular location is the cytoplasm. In terms of biological role, NAD-binding protein involved in the addition of a carboxymethylaminomethyl (cmnm) group at the wobble position (U34) of certain tRNAs, forming tRNA-cmnm(5)s(2)U34. In Streptococcus pyogenes serotype M4 (strain MGAS10750), this protein is tRNA uridine 5-carboxymethylaminomethyl modification enzyme MnmG.